The primary structure comprises 867 residues: MKHEWNLCPSIFFSIFHICLSVQTNYGPYFFDNGPGSTNGNMALLSLSEDTPVGAYIYALNGSDPDGDPVTFGLTFEPGSKRYFAVDPDNGNVTLIEELDREKQDEIEVIVSISDGINKVSEKVRVLVTDANDESPGFLNTPYIVTVPEDTPPGSSIFKIEAVDKDTGSGGSITYIIQEMHGSKFTIDRHSGVLRIKAGVSLDFEKSRTHFVSVLAKDGGGKLRGKNQVFTSTTTVTINVEDVQDSPPVFVGTPYYGYVYEDTTMGSEVLTVKAYDGDRGNPNTIYYSIVNGSDGAFTINNATGGITVIKTPDELKKEVYELKIQVSEITPEGDKVAHAFTVATVRVVDLNNHPPTFYGENGPQNRFELTMYEHPPEGEILRGLKITVNDSDQGANAKFNLRLVGPGGIFRVVPQTVLNEAQVTIIVENSAGIDYEKFHLFTFKLLAIEVNTPEKFSSTADITIHLLDINDNVPRFSSEYYIARIPENSPGGSNVVAATATDLDSGLWGEIKYSIYGPGSDPFLIHPSTGIIYTQPWASLDAEVTSKYNFYVKAEDTEGKYSLAEVFVTVLDINDHSPEFSENIQEKTLIIGTPVKIEATDHDAEEPNNIVDYSIMQADPSNVFDIDQSTGEIKLKSYIRSLDIIQNITRNKDCKWSVVVQAKDRGSPSFSTTAVVKIDVTEETLLHKGPMAAFLMQSKDNPMKALGVLAGVMAIMVVITIFISTAMFWRNKKSNRVMPLRRIIKRRKNDHPPRTARTEWLKFKKSNNSADKFTIQEMESGPKNENRNNNYQGIPVPPRAPCPPPPPRLMPKVSKTERSLPTVSGSLTPKIIDQQMNERVPSASAALVSELKQMLEKKNAGSSMSFY.

Positions 1–21 (MKHEWNLCPSIFFSIFHICLS) are cleaved as a signal peptide. At 22 to 707 (VQTNYGPYFF…SKDNPMKALG (686 aa)) the chain is on the extracellular side. 6 Cadherin domains span residues 39 to 138 (NGNM…SPGF), 139 to 250 (LNTP…PPVF), 251 to 357 (VGTP…PPTF), 363 to 476 (PQNR…VPRF), 477 to 580 (SSEY…SPEF), and 572 to 692 (DIND…GPMA). Residues 708-728 (VLAGVMAIMVVITIFISTAMF) form a helical membrane-spanning segment. Residues 729-867 (WRNKKSNRVM…KNAGSSMSFY (139 aa)) are Cytoplasmic-facing. The disordered stretch occupies residues 777-825 (EMESGPKNENRNNNYQGIPVPPRAPCPPPPPRLMPKVSKTERSLPTVSG). The span at 795–809 (PVPPRAPCPPPPPRL) shows a compositional bias: pro residues.

Expressed in photoreceptor cells of the outer nuclear layer of the retina and in the pinal gland.

It localises to the membrane. Functionally, potential calcium-dependent cell-adhesion protein. This chain is Cadherin-related family member 1 (cdhr1), found in Xenopus laevis (African clawed frog).